Reading from the N-terminus, the 338-residue chain is Lipoate-protein ligase A (338 aa).

A BPL/LPL catalytic domain is found at 29–216 (DPNQRVLFLW…AFFSHYGERV (188 aa)). Residues Arg71, 76 to 79 (GAVF), and Lys134 each bind ATP. Position 134 (Lys134) interacts with (R)-lipoate.

Belongs to the LplA family. Monomer.

The protein localises to the cytoplasm. The enzyme catalyses L-lysyl-[lipoyl-carrier protein] + (R)-lipoate + ATP = N(6)-[(R)-lipoyl]-L-lysyl-[lipoyl-carrier protein] + AMP + diphosphate + H(+). The protein operates within protein modification; protein lipoylation via exogenous pathway; protein N(6)-(lipoyl)lysine from lipoate: step 1/2. It participates in protein modification; protein lipoylation via exogenous pathway; protein N(6)-(lipoyl)lysine from lipoate: step 2/2. Functionally, catalyzes both the ATP-dependent activation of exogenously supplied lipoate to lipoyl-AMP and the transfer of the activated lipoyl onto the lipoyl domains of lipoate-dependent enzymes. This chain is Lipoate-protein ligase A, found in Aeromonas hydrophila subsp. hydrophila (strain ATCC 7966 / DSM 30187 / BCRC 13018 / CCUG 14551 / JCM 1027 / KCTC 2358 / NCIMB 9240 / NCTC 8049).